The following is a 178-amino-acid chain: Protein GrpE (178 aa).

A compositionally biased stretch (basic and acidic residues) spans 1–11; it reads MAEDQAPREET. The disordered stretch occupies residues 1–30; sequence MAEDQAPREETVEAPELTEAPEIDELETLR.

Belongs to the GrpE family. Homodimer.

Its subcellular location is the cytoplasm. Its function is as follows. Participates actively in the response to hyperosmotic and heat shock by preventing the aggregation of stress-denatured proteins, in association with DnaK and GrpE. It is the nucleotide exchange factor for DnaK and may function as a thermosensor. Unfolded proteins bind initially to DnaJ; upon interaction with the DnaJ-bound protein, DnaK hydrolyzes its bound ATP, resulting in the formation of a stable complex. GrpE releases ADP from DnaK; ATP binding to DnaK triggers the release of the substrate protein, thus completing the reaction cycle. Several rounds of ATP-dependent interactions between DnaJ, DnaK and GrpE are required for fully efficient folding. The sequence is that of Protein GrpE from Cereibacter sphaeroides (strain ATCC 17023 / DSM 158 / JCM 6121 / CCUG 31486 / LMG 2827 / NBRC 12203 / NCIMB 8253 / ATH 2.4.1.) (Rhodobacter sphaeroides).